Here is a 327-residue protein sequence, read N- to C-terminus: Beta-ketoacyl-[acyl-carrier-protein] synthase III 2 (327 aa).

Catalysis depends on residues C114 and H251. The segment at 252 to 256 (SANLR) is ACP-binding. N281 is a catalytic residue.

The protein belongs to the thiolase-like superfamily. FabH family. Homodimer.

It localises to the cytoplasm. The enzyme catalyses malonyl-[ACP] + acetyl-CoA + H(+) = 3-oxobutanoyl-[ACP] + CO2 + CoA. It functions in the pathway lipid metabolism; fatty acid biosynthesis. Its function is as follows. Catalyzes the condensation reaction of fatty acid synthesis by the addition to an acyl acceptor of two carbons from malonyl-ACP. Catalyzes the first condensation reaction which initiates fatty acid synthesis and may therefore play a role in governing the total rate of fatty acid production. Possesses both acetoacetyl-ACP synthase and acetyl transacylase activities. Its substrate specificity determines the biosynthesis of branched-chain and/or straight-chain of fatty acids. The chain is Beta-ketoacyl-[acyl-carrier-protein] synthase III 2 from Bacillus cereus (strain ATCC 14579 / DSM 31 / CCUG 7414 / JCM 2152 / NBRC 15305 / NCIMB 9373 / NCTC 2599 / NRRL B-3711).